We begin with the raw amino-acid sequence, 287 residues long: Polyamine aminopropyltransferase (287 aa).

Positions 9-242 (GSWLDEYQND…GIWSWTFASI (234 aa)) constitute a PABS domain. Gln-36 serves as a coordination point for S-methyl-5'-thioadenosine. Spermidine-binding residues include His-67 and Asp-91. Residues Glu-111 and 143-144 (NG) each bind S-methyl-5'-thioadenosine. Asp-162 acts as the Proton acceptor in catalysis. Pro-169 contacts S-methyl-5'-thioadenosine.

Belongs to the spermidine/spermine synthase family. Homodimer or homotetramer.

The protein resides in the cytoplasm. It carries out the reaction S-adenosyl 3-(methylsulfanyl)propylamine + putrescine = S-methyl-5'-thioadenosine + spermidine + H(+). The protein operates within amine and polyamine biosynthesis; spermidine biosynthesis; spermidine from putrescine: step 1/1. Functionally, catalyzes the irreversible transfer of a propylamine group from the amino donor S-adenosylmethioninamine (decarboxy-AdoMet) to putrescine (1,4-diaminobutane) to yield spermidine. The chain is Polyamine aminopropyltransferase from Prochlorococcus marinus (strain SARG / CCMP1375 / SS120).